The sequence spans 130 residues: Small ribosomal subunit protein uS11 (130 aa).

This sequence belongs to the universal ribosomal protein uS11 family. In terms of assembly, part of the 30S ribosomal subunit. Interacts with proteins S7 and S18. Binds to IF-3.

In terms of biological role, located on the platform of the 30S subunit, it bridges several disparate RNA helices of the 16S rRNA. Forms part of the Shine-Dalgarno cleft in the 70S ribosome. This chain is Small ribosomal subunit protein uS11, found in Teredinibacter turnerae (strain ATCC 39867 / T7901).